Reading from the N-terminus, the 179-residue chain is Outer-membrane lipoprotein carrier protein (179 aa).

A signal peptide spans Met1–Gly22.

The protein belongs to the LolA family. In terms of assembly, monomer.

Its subcellular location is the periplasm. Its function is as follows. Participates in the translocation of lipoproteins from the inner membrane to the outer membrane. Only forms a complex with a lipoprotein if the residue after the N-terminal Cys is not an aspartate (The Asp acts as a targeting signal to indicate that the lipoprotein should stay in the inner membrane). The protein is Outer-membrane lipoprotein carrier protein of Helicobacter hepaticus (strain ATCC 51449 / 3B1).